The primary structure comprises 113 residues: MAPPSNPLFVVLCWALFAYLMLVLRDIQAAERQYRTESRDGKCVGEDGLLHAPTELWYNDNDCSEHTCVNDNTGYYEIIRRCTLIVYPPECHLMNGTGTRYPKCCCKVTCELN.

Residues 1-29 (MAPPSNPLFVVLCWALFAYLMLVLRDIQA) form the signal peptide.

Belongs to the scoloptoxin-16 family. Post-translationally, contains 4 disulfide bonds. In terms of tissue distribution, expressed by the venom gland.

It is found in the secreted. The chain is U-scoloptoxin(16)-Sa1a from Scolopendra alternans (Florida Keys giant centipede).